Consider the following 161-residue polypeptide: MQCPHCQHHNSRVLESRSSEGGQSIRRRRECLECKHRFTTYERLELLPVTVIKQDGERQAFDRSKLLRGMVRACEKTDINFQRLEHIVEEIEANLQQQPKREIHSEAIGQMVLQYLRQESEVAYIRFASVYGRFQGIADFVDTLEQLQREQYPERQYLTMT.

Residues 1–11 (MQCPHCQHHNS) show a composition bias toward basic residues. Residues 1 to 21 (MQCPHCQHHNSRVLESRSSEG) are disordered. Residues 3–34 (CPHCQHHNSRVLESRSSEGGQSIRRRRECLEC) fold into a zinc finger. Residues 49 to 139 (VTVIKQDGER…VYGRFQGIAD (91 aa)) enclose the ATP-cone domain.

The protein belongs to the NrdR family. Zn(2+) is required as a cofactor.

Negatively regulates transcription of bacterial ribonucleotide reductase nrd genes and operons by binding to NrdR-boxes. The chain is Transcriptional repressor NrdR from Synechocystis sp. (strain ATCC 27184 / PCC 6803 / Kazusa).